Reading from the N-terminus, the 283-residue chain is MACGSSLDSIDMNSIPLVALNYTVRHRLCLYLNPDAVVAADWTRLAEEMGYDYLEIRNFQRYPDSTMKLLEDWEKKCFRATVGGLLEMLKKMERNDILTDLGPLIEADCMKYLEKKHVPLPIQDDKVDSSEQYRITKSDDPYGSMPETFDAFICYCAQDISFVQEMISRLEQTDYKLKLCVFDRDVLPGTCLWSITSELIENRCRKMVVIISDDYLDSSDCDFQTKFALSLGPGAREKRLIPVKYKPMKRPFPSILRFITVCDYTNPYTKAWFWDKLAKALAR.

The Death domain occupies R27–I105. The intermediate domain stretch occupies residues E106–G143. A TIR domain is found at E147–L281.

The protein resides in the cytoplasm. Functionally, adapter protein involved in the Toll-like receptor and IL-1 receptor signaling pathway in the innate immune response. Activates expression of target genes in the Spemann organizer region during early embryonic development. Is required for normal axis formation. The protein is Myeloid differentiation primary response protein MyD88-A (myd88-a) of Xenopus laevis (African clawed frog).